The following is a 253-amino-acid chain: MSWIPFKIGQPKKQIVPKTVERDFEREYGKLQQLEEQTRRLQKDMKKSTDADLAMSKSAVKISLDLLSNPLCEQDQDLLNMVTALDTAMKRMDAFNQEKVNQIQKTVIEPLKKFGSVFPSLNMAVKRREQALQDYRRLQAKVEKYEEKEKTGPVLAKLHQAREELRPVREDFEAKNRQLLEEMPRFYGSRLDYFQPSFESLIRAQVVYYSEMHKIFGDLSHQLDQPGHSDEQRERENEAKLSELRALSIVADD.

The 224-residue stretch at 9 to 232 (GQPKKQIVPK…LDQPGHSDEQ (224 aa)) folds into the BAR domain. Coiled coils occupy residues 18–51 (KTVE…STDA), 120–152 (SLNM…EKTG), and 231–247 (EQRE…LRAL). A disordered region spans residues 220 to 240 (SHQLDQPGHSDEQRERENEAK). Basic and acidic residues predominate over residues 227–240 (GHSDEQRERENEAK).

Ubiquitously expressed except in brain.

It localises to the cytoplasm. The protein resides in the cytoskeleton. In terms of biological role, involved in cytokinesis and septation where it has a role in the localization of F-actin. In Homo sapiens (Human), this protein is Bridging integrator 3 (BIN3).